Reading from the N-terminus, the 159-residue chain is Protein-export protein SecB (159 aa).

It belongs to the SecB family. In terms of assembly, homotetramer, a dimer of dimers. One homotetramer interacts with 1 SecA dimer.

It localises to the cytoplasm. One of the proteins required for the normal export of preproteins out of the cell cytoplasm. It is a molecular chaperone that binds to a subset of precursor proteins, maintaining them in a translocation-competent state. It also specifically binds to its receptor SecA. The protein is Protein-export protein SecB of Burkholderia vietnamiensis (strain G4 / LMG 22486) (Burkholderia cepacia (strain R1808)).